A 343-amino-acid chain; its full sequence is Tribbles homolog 2 (343 aa).

The tract at residues 25–50 (EELSSIRSAEPSQSFSPNLGSPSPPE) is disordered. Over residues 29–45 (SIRSAEPSQSFSPNLGS) the composition is skewed to polar residues. Positions 61-308 (IGKYLLLEPL…SQEILDHPWF (248 aa)) constitute a Protein kinase domain.

The protein belongs to the protein kinase superfamily. CAMK Ser/Thr protein kinase family. Tribbles subfamily. As to expression, highly expressed in the thyroid, also present in ovary and cerebrum.

The protein resides in the cytoplasm. It localises to the cytoskeleton. Interacts with MAPK kinases and regulates activation of MAP kinases. Does not display kinase activity. The sequence is that of Tribbles homolog 2 from Canis lupus familiaris (Dog).